The sequence spans 660 residues: Cysteine--tRNA ligase, cytoplasmic (660 aa).

The segment covering 1-10 (MSENSSPKLE) has biased composition (polar residues). A disordered region spans residues 1-20 (MSENSSPKLESTSAAAASTK). Zn(2+) is bound at residue Cys65. Residues 67–77 (PTVYDASHMGH) carry the 'HIGH' region motif. Zn(2+)-binding residues include Cys256, His281, and Glu285. The 'KMSKS' region signature appears at 314-318 (KMSKS). ATP is bound at residue Lys317. Disordered stretches follow at residues 563 to 584 (IEKK…KFEK) and 627 to 660 (QKEY…QSPQ). The segment covering 627–639 (QKEYDNQTKEHNN) has biased composition (basic and acidic residues). The segment covering 643 to 660 (SLSTSTSSPTLTSTQSPQ) has biased composition (low complexity).

The protein belongs to the class-I aminoacyl-tRNA synthetase family. Zn(2+) is required as a cofactor.

It is found in the cytoplasm. The catalysed reaction is tRNA(Cys) + L-cysteine + ATP = L-cysteinyl-tRNA(Cys) + AMP + diphosphate. The chain is Cysteine--tRNA ligase, cytoplasmic (cysS) from Dictyostelium discoideum (Social amoeba).